The chain runs to 562 residues: Putative transport protein YE1478 (562 aa).

6 helical membrane passes run 8–28 (LLNG…LCLG), 32–52 (LGPI…LLGQ), 66–86 (FMLF…SIFF), 94–114 (MLAL…GKLF), 118–138 (IGLT…LVGA), and 158–178 (NLSL…ILGA). RCK C-terminal domains lie at 202 to 288 (LDTD…SFRN) and 290 to 373 (KEVF…KIGF). 5 consecutive transmembrane segments (helical) span residues 383–403 (LLAF…TFQF), 406–426 (FSFG…LGFL), 447–467 (FGLM…INSS), 475–495 (MLIS…IFGA), and 541–561 (IANV…PGIL).

Belongs to the AAE transporter (TC 2.A.81) family. YbjL subfamily.

Its subcellular location is the cell membrane. The sequence is that of Putative transport protein YE1478 from Yersinia enterocolitica serotype O:8 / biotype 1B (strain NCTC 13174 / 8081).